The sequence spans 83 residues: Large ribosomal subunit protein eL31 (83 aa).

It belongs to the eukaryotic ribosomal protein eL31 family.

The polypeptide is Large ribosomal subunit protein eL31 (Methanococcus maripaludis (strain DSM 14266 / JCM 13030 / NBRC 101832 / S2 / LL)).